The primary structure comprises 269 residues: Hydroxyethylthiazole kinase (269 aa).

A substrate-binding site is contributed by Met-42. ATP is bound by residues Arg-118 and Ser-164. Substrate is bound at residue Gly-191.

Belongs to the Thz kinase family. Mg(2+) is required as a cofactor.

It catalyses the reaction 5-(2-hydroxyethyl)-4-methylthiazole + ATP = 4-methyl-5-(2-phosphooxyethyl)-thiazole + ADP + H(+). It participates in cofactor biosynthesis; thiamine diphosphate biosynthesis; 4-methyl-5-(2-phosphoethyl)-thiazole from 5-(2-hydroxyethyl)-4-methylthiazole: step 1/1. In terms of biological role, catalyzes the phosphorylation of the hydroxyl group of 4-methyl-5-beta-hydroxyethylthiazole (THZ). In Listeria monocytogenes serovar 1/2a (strain ATCC BAA-679 / EGD-e), this protein is Hydroxyethylthiazole kinase.